The chain runs to 101 residues: Small ribosomal subunit protein bS6 (101 aa).

Belongs to the bacterial ribosomal protein bS6 family.

Functionally, binds together with bS18 to 16S ribosomal RNA. This chain is Small ribosomal subunit protein bS6, found in Oleidesulfovibrio alaskensis (strain ATCC BAA-1058 / DSM 17464 / G20) (Desulfovibrio alaskensis).